The primary structure comprises 626 residues: Myelin-associated glycoprotein (626 aa).

The first 19 residues, 1–19 (MIFLTTLPLFWIMISASRG), serve as a signal peptide directing secretion. Residues 20-325 (GHWGAWMPSS…RTVELSVMYA (306 aa)) form an interaction with RTN4R and RTN4RL2 region. Over 20-516 (GHWGAWMPSS…HRLMWAKIGP (497 aa)) the chain is Extracellular. Positions 22–120 (WGAWMPSSIS…LGGKYYFRGD (99 aa)) constitute an Ig-like V-type domain. 3 disulfide bridges follow: Cys37-Cys165, Cys42-Cys100, and Cys159-Cys217. 65-67 (YPK) is an a ganglioside GT1b (d18:1(4E)) binding site. The N-linked (GlcNAc...) asparagine glycan is linked to Asn99. A ganglioside GT1b (d18:1(4E)) is bound by residues Arg118 and 124-128 (YNQYT). Ig-like C2-type domains are found at residues 139-237 (NTPN…LDVK), 241-325 (VIVE…VMYA), 327-412 (WKPT…VEFA), and 413-508 (PIIL…GAHR). 2 N-linked (GlcNAc...) asparagine glycosylation sites follow: Asn223 and Asn246. A disulfide bridge connects residues Cys261 and Cys305. Residues Asn315 and Asn332 are each glycosylated (N-linked (GlcNAc...) asparagine). An intrachain disulfide couples Cys347 to Cys392. Asn406 is a glycosylation site (N-linked (GlcNAc...) asparagine). Disulfide bonds link Cys421–Cys430 and Cys432–Cys488. N-linked (GlcNAc...) asparagine glycosylation is found at Asn450 and Asn454. The helical transmembrane segment at 517–536 (VGAVVAFAILIAIVCYITQT) threads the bilayer. A lipid anchor (S-palmitoyl cysteine) is attached at Cys531. Residues 537 to 626 (RRKKNVTESP…LAEYAEIRVK (90 aa)) are Cytoplasmic-facing. Phosphoserine is present on residues Ser545, Ser547, and Ser549. Residues 577–626 (LGSERRLLGLRGEPPELDLSYSHSDLGKRPTKDSYTLTEELAEYAEIRVK) form a required for normal axon myelination in the central nervous system region. The interval 581 to 608 (RRLLGLRGEPPELDLSYSHSDLGKRPTK) is disordered.

This sequence belongs to the immunoglobulin superfamily. SIGLEC (sialic acid binding Ig-like lectin) family. As to quaternary structure, monomer and homodimer. Interacts (via the first three N-terminal Ig-like domains) with RTN4R and RTN4RL2. Interacts with isoform 2 of BSG. Post-translationally, N-glycosylated. Phosphorylated on tyrosine residues. In terms of processing, ubiquitinated, leading to proteasomal degradation. Detected in myelin. Detected in olfactory bulb and throughout the brain (at protein level). Detected in brain.

Its subcellular location is the cell membrane. The protein resides in the membrane raft. In terms of biological role, adhesion molecule that mediates interactions between myelinating cells and neurons by binding to neuronal sialic acid-containing gangliosides and to the glycoproteins RTN4R and RTN4RL2. Not required for initial myelination, but seems to play a role in the maintenance of normal axon myelination. Protects motoneurons against apoptosis, also after injury; protection against apoptosis is probably mediated via interaction with neuronal RTN4R and RTN4RL2. Required to prevent degeneration of myelinated axons in adults; this probably depends on binding to gangliosides on the axon cell membrane. Negative regulator of neurite outgrowth; in dorsal root ganglion neurons the inhibition is mediated primarily via binding to neuronal RTN4R or RTN4RL2 and to a lesser degree via binding to neuronal gangliosides. In cerebellar granule cells the inhibition is mediated primarily via binding to neuronal gangliosides. In sensory neurons, inhibition of neurite extension depends only partially on RTN4R, RTN4RL2 and gangliosides. Inhibits axon longitudinal growth. Inhibits axon outgrowth by binding to RTN4R. Preferentially binds to alpha-2,3-linked sialic acid. Binds ganglioside Gt1b. The chain is Myelin-associated glycoprotein (Mag) from Rattus norvegicus (Rat).